Here is a 794-residue protein sequence, read N- to C-terminus: LPS-assembly protein LptD (794 aa).

Residues 1-31 (MPSHCSSLLCARFRLSSLAVIVALAASGVRA) form the signal peptide.

The protein belongs to the LptD family. As to quaternary structure, component of the lipopolysaccharide transport and assembly complex. Interacts with LptE and LptA.

It is found in the cell outer membrane. In terms of biological role, together with LptE, is involved in the assembly of lipopolysaccharide (LPS) at the surface of the outer membrane. The protein is LPS-assembly protein LptD of Marinobacter nauticus (strain ATCC 700491 / DSM 11845 / VT8) (Marinobacter aquaeolei).